The chain runs to 96 residues: Cytochrome c2 iso-2 (96 aa).

Heme c is bound by residues C10, C13, H14, and M75.

This sequence belongs to the cytochrome c family. Post-translationally, binds 1 heme c group covalently per subunit.

Functionally, cytochrome c2 is found mainly in purple, non-sulfur, photosynthetic bacteria where it functions as the electron donor to the oxidized bacteriochlorophyll in the photophosphorylation pathway. However, it may also have a role in the respiratory chain and is found in some non-photosynthetic bacteria. In Magnetospirillum fulvum (Rhodospirillum fulvum), this protein is Cytochrome c2 iso-2.